Consider the following 1208-residue polypeptide: Defective chorion protein, FC125 isoform (1208 aa).

An N-terminal signal peptide occupies residues Met1–Gly19. Disordered regions lie at residues Val23–Asn60, Ala184–Pro212, and Pro268–Tyr294. Over residues Ala32–Asp41 the composition is skewed to polar residues. Residues Pro268–Ala280 are compositionally biased toward low complexity. 5 repeat units span residues Gln493 to Gln518, Gln519 to Gln544, Gln545 to Gln570, Gln571 to Gln596, and Gln597 to Gln622. The tract at residues Gln493 to Gln788 is 12 X 26 AA approximate tandem repeats, Glu, Met-rich. A 6; approximate repeat occupies Gln623 to Gln652. The 7; approximate repeat unit spans residues Gln653–Gln680. The 8; approximate repeat unit spans residues Gln681–Glu696. The stretch at Asp697 to Gln720 is one 9; approximate repeat. The stretch at Gln721–Glu733 is one 10; approximate repeat. One copy of the 11; approximate repeat lies at Asn734–Gln758. A 12; approximate repeat occupies Gln759–Gln788. The span at Glu828 to Val839 shows a compositional bias: acidic residues. Disordered stretches follow at residues Glu828–Ala875, Arg944–Phe1010, and Val1114–Asp1208. Positions Ser957–Gln977 are enriched in polar residues. 2 stretches are compositionally biased toward acidic residues: residues Pro1163–Glu1178 and Asn1194–Asp1208.

It is found in the secreted. In terms of biological role, required for proper assembly of the eggshell. The polypeptide is Defective chorion protein, FC125 isoform (Drosophila melanogaster (Fruit fly)).